We begin with the raw amino-acid sequence, 196 residues long: Pyridoxal 5'-phosphate synthase subunit PdxT (196 aa).

L-glutamine is bound at residue 47–49; that stretch reads GES. Cys-79 serves as the catalytic Nucleophile. L-glutamine is bound by residues Arg-106 and 134–135; that span reads IR. Catalysis depends on charge relay system residues His-170 and Glu-172.

The protein belongs to the glutaminase PdxT/SNO family. As to quaternary structure, in the presence of PdxS, forms a dodecamer of heterodimers. Only shows activity in the heterodimer.

It carries out the reaction aldehydo-D-ribose 5-phosphate + D-glyceraldehyde 3-phosphate + L-glutamine = pyridoxal 5'-phosphate + L-glutamate + phosphate + 3 H2O + H(+). The enzyme catalyses L-glutamine + H2O = L-glutamate + NH4(+). The protein operates within cofactor biosynthesis; pyridoxal 5'-phosphate biosynthesis. Its function is as follows. Catalyzes the hydrolysis of glutamine to glutamate and ammonia as part of the biosynthesis of pyridoxal 5'-phosphate. The resulting ammonia molecule is channeled to the active site of PdxS. This is Pyridoxal 5'-phosphate synthase subunit PdxT from Bacillus velezensis (strain DSM 23117 / BGSC 10A6 / LMG 26770 / FZB42) (Bacillus amyloliquefaciens subsp. plantarum).